The following is a 196-amino-acid chain: Phosphoheptose isomerase (196 aa).

In terms of domain architecture, SIS spans Val-31–Val-196. Asn-46 to Gly-48 contacts substrate. Zn(2+) contacts are provided by His-55 and Glu-59. Residues Glu-59, Asn-88–Asp-89, Ser-114–Ser-116, Ser-119, and Gln-166 contribute to the substrate site. The Zn(2+) site is built by Gln-166 and His-174.

The protein belongs to the SIS family. GmhA subfamily. Requires Zn(2+) as cofactor.

It is found in the cytoplasm. The catalysed reaction is 2 D-sedoheptulose 7-phosphate = D-glycero-alpha-D-manno-heptose 7-phosphate + D-glycero-beta-D-manno-heptose 7-phosphate. The protein operates within carbohydrate biosynthesis; D-glycero-D-manno-heptose 7-phosphate biosynthesis; D-glycero-alpha-D-manno-heptose 7-phosphate and D-glycero-beta-D-manno-heptose 7-phosphate from sedoheptulose 7-phosphate: step 1/1. Catalyzes the isomerization of sedoheptulose 7-phosphate in D-glycero-D-manno-heptose 7-phosphate. The chain is Phosphoheptose isomerase from Crocosphaera subtropica (strain ATCC 51142 / BH68) (Cyanothece sp. (strain ATCC 51142)).